A 693-amino-acid chain; its full sequence is Elongation factor G (693 aa).

The tr-type G domain occupies Glu-8–Leu-282. GTP contacts are provided by residues Ala-17–Thr-24, Asp-81–His-85, and Asn-135–Asp-138.

Belongs to the TRAFAC class translation factor GTPase superfamily. Classic translation factor GTPase family. EF-G/EF-2 subfamily.

It is found in the cytoplasm. Catalyzes the GTP-dependent ribosomal translocation step during translation elongation. During this step, the ribosome changes from the pre-translocational (PRE) to the post-translocational (POST) state as the newly formed A-site-bound peptidyl-tRNA and P-site-bound deacylated tRNA move to the P and E sites, respectively. Catalyzes the coordinated movement of the two tRNA molecules, the mRNA and conformational changes in the ribosome. The polypeptide is Elongation factor G (Streptococcus pneumoniae (strain ATCC 700669 / Spain 23F-1)).